A 207-amino-acid polypeptide reads, in one-letter code: Germin-like protein 1 (207 aa).

An N-terminal signal peptide occupies residues 1 to 17; the sequence is MLRIIFLLSLLFALSND. Cys-23 and Cys-38 are joined by a disulfide. Residues 51–197 enclose the Cupin type-1 domain; the sequence is FSLGTPGNTT…TTFLPPATVK (147 aa). Asn-58 is a glycosylation site (N-linked (GlcNAc...) asparagine). Mn(2+) is bound by residues His-99, His-101, Glu-106, and His-145.

It belongs to the germin family. In terms of assembly, oligomer (believed to be a pentamer but probably hexamer).

The protein localises to the secreted. The protein resides in the extracellular space. It localises to the apoplast. Functionally, may play a role in plant defense. Probably has no oxalate oxidase activity even if the active site is conserved. This chain is Germin-like protein 1 (GER1), found in Brassica napus (Rape).